Here is a 747-residue protein sequence, read N- to C-terminus: Myotubularin-related protein 12 (747 aa).

Positions 205 to 643 constitute a Myotubularin phosphatase domain; sequence FDTPKDWCWE…PEIKVWAQRY (439 aa). Residues 449–558 are interaction with MTM1; it reads VPIFLLFLDC…RGQQKGSRFK (110 aa). The segment at 548 to 575 is disordered; that stretch reads DRGQQKGSRFKHQRQLSLPLTQSKSSPK. Polar residues predominate over residues 562–572; the sequence is QLSLPLTQSKS. Residues Ser-564 and Ser-601 each carry the phosphoserine modification.

Belongs to the protein-tyrosine phosphatase family. Non-receptor class myotubularin subfamily. As to quaternary structure, heterodimer with lipid phosphatase MTM1. Heterodimer with lipid phosphatase MTMR2. In terms of tissue distribution, expressed in skeletal muscles (at protein level).

Its subcellular location is the cytoplasm. It localises to the sarcoplasmic reticulum. The protein localises to the myofibril. It is found in the sarcomere. Functionally, acts as an adapter for the myotubularin-related phosphatases. Regulates phosphatase MTM1 protein stability and possibly its intracellular location. By stabilizing MTM1 protein levels, required for skeletal muscle maintenance but not for myogenesis. This is Myotubularin-related protein 12 (Mtmr12) from Mus musculus (Mouse).